Here is a 293-residue protein sequence, read N- to C-terminus: Phosphatidylserine decarboxylase proenzyme (293 aa).

Active-site charge relay system; for autoendoproteolytic cleavage activity residues include D90, H147, and S254. S254 acts as the Schiff-base intermediate with substrate; via pyruvic acid; for decarboxylase activity in catalysis. S254 carries the pyruvic acid (Ser); by autocatalysis modification.

This sequence belongs to the phosphatidylserine decarboxylase family. PSD-B subfamily. Prokaryotic type I sub-subfamily. In terms of assembly, heterodimer of a large membrane-associated beta subunit and a small pyruvoyl-containing alpha subunit. Requires pyruvate as cofactor. In terms of processing, is synthesized initially as an inactive proenzyme. Formation of the active enzyme involves a self-maturation process in which the active site pyruvoyl group is generated from an internal serine residue via an autocatalytic post-translational modification. Two non-identical subunits are generated from the proenzyme in this reaction, and the pyruvate is formed at the N-terminus of the alpha chain, which is derived from the carboxyl end of the proenzyme. The autoendoproteolytic cleavage occurs by a canonical serine protease mechanism, in which the side chain hydroxyl group of the serine supplies its oxygen atom to form the C-terminus of the beta chain, while the remainder of the serine residue undergoes an oxidative deamination to produce ammonia and the pyruvoyl prosthetic group on the alpha chain. During this reaction, the Ser that is part of the protease active site of the proenzyme becomes the pyruvoyl prosthetic group, which constitutes an essential element of the active site of the mature decarboxylase.

It localises to the cell membrane. It carries out the reaction a 1,2-diacyl-sn-glycero-3-phospho-L-serine + H(+) = a 1,2-diacyl-sn-glycero-3-phosphoethanolamine + CO2. It functions in the pathway phospholipid metabolism; phosphatidylethanolamine biosynthesis; phosphatidylethanolamine from CDP-diacylglycerol: step 2/2. Its function is as follows. Catalyzes the formation of phosphatidylethanolamine (PtdEtn) from phosphatidylserine (PtdSer). The protein is Phosphatidylserine decarboxylase proenzyme of Yersinia enterocolitica serotype O:8 / biotype 1B (strain NCTC 13174 / 8081).